Reading from the N-terminus, the 234-residue chain is tRNA1(Val) (adenine(37)-N6)-methyltransferase (234 aa).

Belongs to the methyltransferase superfamily. tRNA (adenine-N(6)-)-methyltransferase family.

Its subcellular location is the cytoplasm. It carries out the reaction adenosine(37) in tRNA1(Val) + S-adenosyl-L-methionine = N(6)-methyladenosine(37) in tRNA1(Val) + S-adenosyl-L-homocysteine + H(+). Its function is as follows. Specifically methylates the adenine in position 37 of tRNA(1)(Val) (anticodon cmo5UAC). The chain is tRNA1(Val) (adenine(37)-N6)-methyltransferase from Aliivibrio fischeri (strain MJ11) (Vibrio fischeri).